The following is a 352-amino-acid chain: Rhodopsin (352 aa).

The Extracellular segment spans residues 1-36; it reads MNGTEGPFFYIPMVNTTGIVRSPYEYPQYYLVNPAA. N-linked (GlcNAc...) asparagine glycosylation is found at Asn2 and Asn15. A helical transmembrane segment spans residues 37–61; it reads YACLGAYMFFLILVGFPVNFLTLYV. The Cytoplasmic portion of the chain corresponds to 62 to 73; that stretch reads TLEHKKLRTPLN. Residues 74–96 form a helical membrane-spanning segment; that stretch reads YILLNLAVADLFMVFGGFTTTMY. Residues 97–110 lie on the Extracellular side of the membrane; that stretch reads TSMHGYFVLGRLGC. Residues Cys110 and Cys187 are joined by a disulfide bond. Residues 111–133 form a helical membrane-spanning segment; that stretch reads NIEGFFATLGGEIALWSLVVLAI. Residues 134–136 carry the 'Ionic lock' involved in activated form stabilization motif; it reads ERW. Topologically, residues 134-152 are cytoplasmic; the sequence is ERWVVVCKPISNFRFGENH. A helical transmembrane segment spans residues 153–173; sequence AIMGVAFTWFMASACAVPPLV. Over 174–202 the chain is Extracellular; sequence GWSRYIPEGMQCSCGVDYYTRAEGFNNES. Asn200 carries an N-linked (GlcNAc...) asparagine glycan. Residues 203-224 form a helical membrane-spanning segment; it reads FVIYMFIVHFCIPLAVVGFCYG. At 225 to 252 the chain is on the cytoplasmic side; the sequence is RLLCAVKEAAAAQQESETTQRAEREVSR. The helical transmembrane segment at 253–274 threads the bilayer; that stretch reads MVVIMVIGFLVCWLPYASVAWY. The Extracellular portion of the chain corresponds to 275-286; sequence IFTHQGSEFGPP. The helical transmembrane segment at 287–308 threads the bilayer; sequence FMTVPAFFAKSSSIYNPMIYIC. N6-(retinylidene)lysine is present on Lys296. Over 309-352 the chain is Cytoplasmic; the sequence is MNKQFRHCMITTLCCGKNPFEEEEGASTTKTEASSVSSSSVSPA. 2 S-palmitoyl cysteine lipidation sites follow: Cys322 and Cys323. A disordered region spans residues 331–352; that stretch reads EEGASTTKTEASSVSSSSVSPA. Over residues 342–352 the composition is skewed to low complexity; the sequence is SSVSSSSVSPA.

This sequence belongs to the G-protein coupled receptor 1 family. Opsin subfamily. Phosphorylated on some or all of the serine and threonine residues present in the C-terminal region. Post-translationally, contains one covalently linked retinal chromophore.

The protein resides in the membrane. It localises to the cell projection. Its subcellular location is the cilium. It is found in the photoreceptor outer segment. In terms of biological role, photoreceptor required for image-forming vision at low light intensity. While most salt water fish species use retinal as chromophore, most freshwater fish use 3-dehydroretinal, or a mixture of retinal and 3-dehydroretinal. Light-induced isomerization of 11-cis to all-trans retinal triggers a conformational change that activates signaling via G-proteins. Subsequent receptor phosphorylation mediates displacement of the bound G-protein alpha subunit by arrestin and terminates signaling. This Zosterisessor ophiocephalus (Grass goby) protein is Rhodopsin (rho).